A 282-amino-acid polypeptide reads, in one-letter code: Putative phosphoenolpyruvate synthase regulatory protein (282 aa).

162–169 (GVSRSGKT) provides a ligand contact to ADP.

This sequence belongs to the pyruvate, phosphate/water dikinase regulatory protein family. PSRP subfamily.

The enzyme catalyses [pyruvate, water dikinase] + ADP = [pyruvate, water dikinase]-phosphate + AMP + H(+). It catalyses the reaction [pyruvate, water dikinase]-phosphate + phosphate + H(+) = [pyruvate, water dikinase] + diphosphate. In terms of biological role, bifunctional serine/threonine kinase and phosphorylase involved in the regulation of the phosphoenolpyruvate synthase (PEPS) by catalyzing its phosphorylation/dephosphorylation. The sequence is that of Putative phosphoenolpyruvate synthase regulatory protein from Psychrobacter arcticus (strain DSM 17307 / VKM B-2377 / 273-4).